We begin with the raw amino-acid sequence, 468 residues long: MSDIKKVVLAYSGGLDTSVILKWLQDVYKCEVVTFTADLGQGEELEPARAKALKAGIKPKNIYIDDVREEFVRDFVFPMFRANTVYEGEYLLGTSIARPLIAKRLIEIVNETGADAICHGATGKGNDQVRFELGAYALKPGIKVIAPWREWDLMSREKLMAYAEKHGIEIDMKHKKGGSPYSMDANLLHISYEGRHLEDPAAEAEESMWRWTVSPEKAPNKAEYLDLEFAKGDVVAVNGKKLKAHEVLALLNELGGKHGIGRLDLVENRYVGMKSRGCYETPGGTILLRAHRAIESVTLDREVAHLKDDLMPRYASLVYNGYWWSPERKALQVLIDHTQQTVNGVVRLKLYKGNVIVVGRDSKTDSLFDSTIATFEDDAGAYDQRDAGGFIKLNALRLRIAANLAGRKAGKPVAKKAAAKPVTKAVPKAVAKPVTKAVAKAAEKPVAAKATAKPVKAPVKKPIAKKKG.

Residues 10–18 (AYSGGLDTS) and alanine 37 contribute to the ATP site. 2 residues coordinate L-citrulline: tyrosine 90 and serine 95. Glycine 120 is a binding site for ATP. Threonine 122, asparagine 126, and aspartate 127 together coordinate L-aspartate. Asparagine 126 is an L-citrulline binding site. Residues arginine 130, serine 182, serine 191, glutamate 267, and tyrosine 279 each contribute to the L-citrulline site. A compositionally biased stretch (low complexity) spans 445-457 (PVAAKATAKPVKA). The tract at residues 445–468 (PVAAKATAKPVKAPVKKPIAKKKG) is disordered. A compositionally biased stretch (basic residues) spans 458–468 (PVKKPIAKKKG).

Belongs to the argininosuccinate synthase family. Type 1 subfamily. As to quaternary structure, homotetramer.

The protein localises to the cytoplasm. It catalyses the reaction L-citrulline + L-aspartate + ATP = 2-(N(omega)-L-arginino)succinate + AMP + diphosphate + H(+). Its pathway is amino-acid biosynthesis; L-arginine biosynthesis; L-arginine from L-ornithine and carbamoyl phosphate: step 2/3. This is Argininosuccinate synthase from Dechloromonas aromatica (strain RCB).